The chain runs to 385 residues: Arginine biosynthesis bifunctional protein ArgJ (385 aa).

Thr-142, Lys-168, Thr-179, Glu-259, Asn-380, and Thr-385 together coordinate substrate. The active-site Nucleophile is Thr-179.

This sequence belongs to the ArgJ family. Heterotetramer of two alpha and two beta chains.

The protein localises to the cytoplasm. The enzyme catalyses N(2)-acetyl-L-ornithine + L-glutamate = N-acetyl-L-glutamate + L-ornithine. The catalysed reaction is L-glutamate + acetyl-CoA = N-acetyl-L-glutamate + CoA + H(+). The protein operates within amino-acid biosynthesis; L-arginine biosynthesis; L-ornithine and N-acetyl-L-glutamate from L-glutamate and N(2)-acetyl-L-ornithine (cyclic): step 1/1. Its pathway is amino-acid biosynthesis; L-arginine biosynthesis; N(2)-acetyl-L-ornithine from L-glutamate: step 1/4. Functionally, catalyzes two activities which are involved in the cyclic version of arginine biosynthesis: the synthesis of N-acetylglutamate from glutamate and acetyl-CoA as the acetyl donor, and of ornithine by transacetylation between N(2)-acetylornithine and glutamate. In Leptospira interrogans serogroup Icterohaemorrhagiae serovar Lai (strain 56601), this protein is Arginine biosynthesis bifunctional protein ArgJ.